The following is a 270-amino-acid chain: 26S proteasome regulatory subunit rpn12 (270 aa).

In terms of domain architecture, PCI spans 65–237; sequence CDIESFARYA…LETEDGMLID (173 aa).

The protein belongs to the proteasome subunit S14 family.

Its function is as follows. Acts as a regulatory subunit of the 26S proteasome which is involved in the ATP-dependent degradation of ubiquitinated proteins. The chain is 26S proteasome regulatory subunit rpn12 (rpn12) from Schizosaccharomyces pombe (strain 972 / ATCC 24843) (Fission yeast).